A 198-amino-acid polypeptide reads, in one-letter code: Recombination protein RecR (198 aa).

A C4-type zinc finger spans residues 58-73; it reads CKVCQTLTDKEICPIC. Positions 81-175 constitute a Toprim domain; it reads KVIMVVENTR…KVSRIASGVP (95 aa).

This sequence belongs to the RecR family.

Functionally, may play a role in DNA repair. It seems to be involved in an RecBC-independent recombinational process of DNA repair. It may act with RecF and RecO. This Lachnoclostridium phytofermentans (strain ATCC 700394 / DSM 18823 / ISDg) (Clostridium phytofermentans) protein is Recombination protein RecR.